The sequence spans 2776 residues: Microtubule-associated protein 1A (2776 aa).

A phosphoserine mark is found at serine 114, serine 117, serine 118, serine 121, and serine 155. Tyrosine 177 carries the phosphotyrosine modification. Residues 310–331 form a disordered region; sequence PSKIKHRADSKESLKAAPKTAM. 2 positions are modified to phosphoserine: serine 319 and serine 322. Copy 1 of the repeat occupies 336 to 338; sequence KRE. The segment at 336–541 is 11 X 3 AA approximate repeats of K-K-[DE]; the sequence is KREEVLEEGA…TQDFEELKRE (206 aa). Residues 345 to 390 are compositionally biased toward basic and acidic residues; that stretch reads AKEARSELAKELAKSEKKAKEPSEKPPEKPSKPERVRTESSEALKA. 8 disordered regions span residues 345 to 678, 738 to 809, 846 to 1076, 1094 to 1210, 1223 to 1651, 1685 to 1729, 1744 to 1848, and 1866 to 2648; these read AKEA…KAES, TIPG…TELT, EDQS…AGGQ, ETGE…ESLG, EKGP…SPEQ, DGQG…FKDF, LAES…APFS, and AELE…NGLK. Phosphoserine is present on serine 384. Over residues 391 to 406 the composition is skewed to basic residues; the sequence is EKRKLIKDKVGKKHLK. Basic and acidic residues-rich tracts occupy residues 407–464 and 484–500; these read EKIS…KPDL and LKVD…ELSS. A run of 9 repeats spans residues 415 to 417, 420 to 422, 424 to 426, 427 to 429, 431 to 433, 436 to 438, 440 to 442, 444 to 446, and 449 to 451. Threonine 504 carries the post-translational modification Phosphothreonine. Phosphoserine occurs at positions 526 and 527. The segment covering 536 to 556 has biased composition (basic and acidic residues); that stretch reads EELKREERGLLAEPRDTELGE. The stretch at 539–541 is repeat 11; that stretch reads KRE. The span at 567–579 shows a compositional bias: polar residues; that stretch reads GRPSTAIQVTQPP. Residues 587-631 show a composition bias toward basic and acidic residues; it reads QVEREKEVVPDFPEDKGSKNRAPDSGAEVEREKETWEERKPREAE. 2 positions are modified to phosphoserine: serine 604 and serine 611. Residue threonine 633 is modified to Phosphothreonine. A compositionally biased stretch (basic and acidic residues) spans 640–667; that stretch reads AREESEPEVKEDVIEKAELEEMEEVHPS. Phosphoserine is present on residues serine 644, serine 667, serine 678, and serine 786. Composition is skewed to polar residues over residues 785-800, 846-859, and 870-882; these read ASQS…SSKT, EDQS…PQTE, and TVTS…TEAT. A phosphoserine mark is found at serine 873, serine 876, serine 877, and serine 890. Phosphothreonine is present on threonine 893. A phosphoserine mark is found at serine 895, serine 899, and serine 908. Residues 944–954 show a composition bias toward polar residues; sequence VTTSEKLSSQY. A phosphoserine mark is found at serine 981, serine 991, serine 999, serine 1008, serine 1014, serine 1023, and serine 1062. Threonine 1068 carries the post-translational modification Phosphothreonine. Over residues 1096–1105 the composition is skewed to low complexity; that stretch reads GEAGAASGAG. A compositionally biased stretch (basic and acidic residues) spans 1112 to 1124; that stretch reads RTQEPAEPQKDEL. Serine 1131, serine 1133, serine 1147, serine 1159, serine 1177, serine 1187, serine 1190, serine 1196, serine 1205, and serine 1208 each carry phosphoserine. A compositionally biased stretch (polar residues) spans 1179–1189; sequence EDTQSLSFSEE. Over residues 1197–1210 the composition is skewed to polar residues; it reads LDISSKQLSPESLG. A compositionally biased stretch (basic and acidic residues) spans 1223-1234; that stretch reads EKGPLVKAEDNS. Residues serine 1251, serine 1289, serine 1310, serine 1313, and serine 1316 each carry the phosphoserine modification. Low complexity predominate over residues 1302–1317; sequence TSDSSLTKSPESLSSP. Basic and acidic residues-rich tracts occupy residues 1332-1350, 1370-1384, 1391-1435, 1449-1488, 1499-1541, and 1549-1599; these read GSED…RKSE, SVMH…EENK, KTSE…KALE, PRAR…RAPE, RAPE…DQDN, and GTLK…EKTR. Serine 1516, serine 1580, and serine 1606 each carry phosphoserine. Over residues 1609-1625 the composition is skewed to basic and acidic residues; sequence EEGKAREQEEKYWKEQD. Phosphoserine occurs at positions 1634 and 1648. A compositionally biased stretch (polar residues) spans 1709-1718; it reads QEITPLQHTP. A phosphoserine mark is found at serine 1720, serine 1747, serine 1762, serine 1768, and serine 1772. At threonine 1777 the chain carries Phosphothreonine. Serine 1783 and serine 1789 each carry phosphoserine. Over residues 1794–1808 the composition is skewed to polar residues; the sequence is TKSTPPTRNEPTTPS. Residues 1823–1844 are compositionally biased toward pro residues; the sequence is LPPAPLSPAPAPPTPAPDPHAP. Positions 1878–1890 are enriched in basic and acidic residues; sequence KDYRKAEGEREGE. Serine 1902 carries the post-translational modification Phosphoserine. Basic and acidic residues-rich tracts occupy residues 1907 to 1935 and 1972 to 1988; these read EVTE…DERS and STKE…EKEL. Residue threonine 1928 is modified to Phosphothreonine. Residues 1990–2006 are compositionally biased toward polar residues; the sequence is SAVSPPNLHSDTPTFSY. Serine 1993 is subject to Phosphoserine. The segment covering 2013–2039 has biased composition (pro residues); it reads TIPPRQEPEPGPNVEPSFTPPAVPPRA. Position 2031 is a phosphothreonine (threonine 2031). Residues 2042–2058 show a composition bias toward polar residues; the sequence is SLSQDPSPPLNGSTTSC. Phosphoserine is present on residues serine 2048 and serine 2082. Positions 2060–2096 are enriched in basic and acidic residues; sequence PDRRTPSPKEAGRSHWDDGTNDSDLEKGAREQPEKET. The span at 2149-2158 shows a compositional bias: pro residues; the sequence is PAPPQLPSPA. 5 positions are modified to phosphoserine: serine 2209, serine 2226, serine 2230, serine 2233, and serine 2234. Residues 2231–2242 show a composition bias toward polar residues; sequence EGSSSEATTPVI. The segment covering 2279–2292 has biased composition (low complexity); the sequence is PLSPAPLASRDLAP. The span at 2355–2367 shows a compositional bias: basic and acidic residues; it reads AEKEEAEALHAWE. Position 2425 is a phosphoserine (serine 2425). Over residues 2478–2490 the composition is skewed to low complexity; the sequence is SASDSGSSQSDSD. Residues 2535 to 2551 are compositionally biased toward pro residues; the sequence is DPPPAPLPDPRPPPPRP. Residues 2566 to 2576 are compositionally biased toward basic and acidic residues; sequence GRVERLREKVQ. 2 positions are modified to phosphoserine: serine 2623 and serine 2637.

It belongs to the MAP1 family. In terms of assembly, 3 different light chains, LC1 (a cleavage product of MAP1B), LC2 (a cleavage product of MAP1A) and LC3 (produced by one of the MAP1LC3 genes), can associate with the MAP1A or MAP1B heavy chains. Interacts with guanylate kinase-like domain of DLG1, DLG2 and DLG4. Binds to CSNK1D. Interacts with TIAM2. As to quaternary structure, interacts with ELAVL4. Phosphorylated by CSNK1D. In terms of processing, LC2 is generated from MAP1A by proteolytic processing. It is free to associate with both MAP1A and MAP1B. In terms of tissue distribution, both isoforms highly expressed in brain, and to a lesser extent in embryo. Isoform 1 is also expressed at a low level in other tissues including heart and muscle.

It is found in the cytoplasm. The protein resides in the cytoskeleton. Structural protein involved in the filamentous cross-bridging between microtubules and other skeletal elements. The sequence is that of Microtubule-associated protein 1A (Map1a) from Mus musculus (Mouse).